The sequence spans 585 residues: uncharacterized protein (585 aa).

The tract at residues 1–34 is disordered; that stretch reads MNAYVRDSESVYSESYPPENFISNEPEKSKDKDN. At 1-89 the chain is on the cytoplasmic side; sequence MNAYVRDSES…KRRLKSRHIQ (89 aa). Over residues 10-19 the composition is skewed to low complexity; that stretch reads SVYSESYPPE. Over residues 25-34 the composition is skewed to basic and acidic residues; it reads EPEKSKDKDN. The chain crosses the membrane as a helical span at residues 90-110; the sequence is MIGIGGAIGTGVWVGSSKSLY. Topologically, residues 111-121 are extracellular; that stretch reads RGGAASVLIDY. The chain crosses the membrane as a helical span at residues 122-142; that stretch reads CIVGTMVFCTVYALGELAVAF. Residues 143–159 lie on the Cytoplasmic side of the membrane; it reads PTRGSFVTHATRFIDES. The chain crosses the membrane as a helical span at residues 160–180; sequence WGFALSWNYVFSFIVTIPLEL. The Extracellular segment spans residues 181-193; sequence TTGTMMIKYWTNL. Residues 194–214 form a helical membrane-spanning segment; that stretch reads NSGIWVTVFIVFLFFINIFGV. Residues 215–221 are Cytoplasmic-facing; sequence KGYGEME. A helical membrane pass occupies residues 222 to 242; it reads FIMSTIKVVAMCGFIILGIII. At 243–271 the chain is on the extracellular side; sequence DCGGVPTDHRGYMGTHIFRENAFRHKFKG. Residues 272–292 traverse the membrane as a helical segment; it reads FCAVFTSAAFSFSGTEYVGVA. At 293-313 the chain is on the cytoplasmic side; it reads AAETENPAKAFPVAVRQTLFR. Residues 314–334 form a helical membrane-spanning segment; that stretch reads IAIFYILSLFIVSLLISGADP. Residues 335-361 are Extracellular-facing; it reads RLTSYHGVDASPFVLAIKDANIKALPS. The chain crosses the membrane as a helical span at residues 362–382; it reads ILNAIILISVISSANAQLYAG. The Cytoplasmic segment spans residues 383 to 407; sequence SRAIHSLGCNGFAPKCFTLVDREGR. The chain crosses the membrane as a helical span at residues 408–428; that stretch reads PLVALLILFLFMFLGYLVETG. Residues 429–436 are Extracellular-facing; it reads QYDTVFDW. Residues 437-457 form a helical membrane-spanning segment; the sequence is MLSISGLGTLFCWGSICLAHI. The Cytoplasmic portion of the chain corresponds to 458–486; sequence RYRAAMKHQNRSLKEVGFVSPFNVYASYY. A helical transmembrane segment spans residues 487–507; it reads AFILVCLVLAAEFYVSIFPVG. The Extracellular segment spans residues 508-511; the sequence is GKPD. The helical transmembrane segment at 512–532 threads the bilayer; sequence ASAFFENYLSAPVILVFFICH. The Cytoplasmic segment spans residues 533–585; the sequence is KLYYKTKRITLSNMDLETDFAYKTPVEEEEEEEKSAGSLSIKQRMKKLSDMMC.

This sequence belongs to the amino acid-polyamine-organocation (APC) superfamily.

It is found in the endoplasmic reticulum. The protein resides in the membrane. This is an uncharacterized protein from Schizosaccharomyces pombe (strain 972 / ATCC 24843) (Fission yeast).